Here is a 510-residue protein sequence, read N- to C-terminus: NAD(P)H-quinone oxidoreductase subunit 2 A, chloroplastic (510 aa).

A run of 13 helical transmembrane segments spans residues 31 to 51 (FIFPECILIFGLILLLMIDLT), 57 to 77 (TPWLYFISSTSLVMSITALLF), 99 to 119 (IFQFLILLCSTLCIPLSVEYI), 124 to 144 (MAITEFLLFVLTATLGGMFLC), 149 to 169 (LITIFVAPECFSLCSYLLSGY), 183 to 203 (YLLMGGASSSILVYGFSWLYG), 229 to 249 (ISIALISITVGIGFKLSPAPF), 295 to 315 (WHLLLEILAILSMILGNLIAI), 323 to 343 (MLAYSSIGQIGYVIIGIIVGD), 354 to 374 (YMLFYIAMNLGTFACIVLFGL), 395 to 415 (ALSSALCLLSLGGIPPLAGFF), 418 to 438 (LYLFWCGWQAGLYFLVSIGLL), and 484 to 504 (MIVCVIASTIPGISMNPIIAI).

Belongs to the complex I subunit 2 family. As to quaternary structure, NDH is composed of at least 16 different subunits, 5 of which are encoded in the nucleus.

It is found in the plastid. Its subcellular location is the chloroplast thylakoid membrane. The enzyme catalyses a plastoquinone + NADH + (n+1) H(+)(in) = a plastoquinol + NAD(+) + n H(+)(out). It catalyses the reaction a plastoquinone + NADPH + (n+1) H(+)(in) = a plastoquinol + NADP(+) + n H(+)(out). NDH shuttles electrons from NAD(P)H:plastoquinone, via FMN and iron-sulfur (Fe-S) centers, to quinones in the photosynthetic chain and possibly in a chloroplast respiratory chain. The immediate electron acceptor for the enzyme in this species is believed to be plastoquinone. Couples the redox reaction to proton translocation, and thus conserves the redox energy in a proton gradient. This chain is NAD(P)H-quinone oxidoreductase subunit 2 A, chloroplastic, found in Nymphaea alba (White water-lily).